We begin with the raw amino-acid sequence, 161 residues long: MIRQTKTIRVFLKPKSKMVFDNERTKEIRKKHPYWFVQGDLRVNKTAVIFFSDTQGKKGIPYVPVSPGKYQVEYYDDKIVITKLMTLQKIYTCLVFPISRKAYLLDEYTIVDSTAEKNAINIYFDRPMKYKKEKMSGTWYKYIFEEDISTYFMQAKARIKS.

This is an uncharacterized protein from Acidianus convivator (ATV).